The primary structure comprises 117 residues: Ig heavy chain V region 1-72 (117 aa).

Positions 1 to 19 (MGWSCIMLFLAATATGVHS) are cleaved as a signal peptide. The interval 20 to 49 (QVQLQQPGAELVKPGASVKLSCKASGYTFT) is framework-1. Cys-41 and Cys-115 are joined by a disulfide. Positions 50–54 (SYWMH) are complementarity-determining-1. Positions 55 to 68 (WVKQRPGRGLEWIG) are framework-2. Residues 69–85 (RIDPNSGGTKYNEKFKS) are complementarity-determining-2. Residues 86–117 (KATLTVDKPSSTAYMQLSSLTSEDSAVYYCAR) are framework-3.

The protein is Ig heavy chain V region 1-72 of Mus musculus (Mouse).